A 1146-amino-acid polypeptide reads, in one-letter code: ATP-dependent helicase/deoxyribonuclease subunit B (1146 aa).

In terms of domain architecture, UvrD-like helicase ATP-binding spans 1–280; sequence MSLRFIYGRA…LNSKPLFRFS (280 aa). 8-15 is an ATP binding site; the sequence is GRAGSGKT. The UvrD-like helicase C-terminal domain occupies 276–584; sequence LFRFSQSPEL…LVGSLERSRS (309 aa). [4Fe-4S] cluster is bound by residues Cys786, Cys1105, Cys1108, and Cys1114.

Belongs to the helicase family. AddB/RexB type 1 subfamily. Heterodimer of AddA and AddB. The cofactor is Mg(2+). Requires [4Fe-4S] cluster as cofactor.

Functionally, the heterodimer acts as both an ATP-dependent DNA helicase and an ATP-dependent, dual-direction single-stranded exonuclease. Recognizes the chi site generating a DNA molecule suitable for the initiation of homologous recombination. The AddB subunit has 5' -&gt; 3' nuclease activity but not helicase activity. The polypeptide is ATP-dependent helicase/deoxyribonuclease subunit B (Acetivibrio thermocellus (strain ATCC 27405 / DSM 1237 / JCM 9322 / NBRC 103400 / NCIMB 10682 / NRRL B-4536 / VPI 7372) (Clostridium thermocellum)).